We begin with the raw amino-acid sequence, 678 residues long: Translation factor GUF1 homolog, chloroplastic (678 aa).

A chloroplast-targeting transit peptide spans 1–43 (MASILLSLNTHTLLPLHTRTRTTKTTLKILRFSHKLPPSSPFY). Positions 81–262 (KNIRNFCIIA…AIVERVPPPR (182 aa)) constitute a tr-type G domain. GTP contacts are provided by residues 90 to 97 (AHIDHGKS), 155 to 159 (DTPGH), and 209 to 212 (NKID).

Belongs to the TRAFAC class translation factor GTPase superfamily. Classic translation factor GTPase family. LepA subfamily.

It is found in the plastid. The protein localises to the chloroplast. The catalysed reaction is GTP + H2O = GDP + phosphate + H(+). Promotes chloroplast protein synthesis. May act as a fidelity factor of the translation reaction, by catalyzing a one-codon backward translocation of tRNAs on improperly translocated ribosomes. This is Translation factor GUF1 homolog, chloroplastic from Populus trichocarpa (Western balsam poplar).